A 341-amino-acid chain; its full sequence is Alpha-1,4-N-acetylglucosaminyltransferase (341 aa).

Topologically, residues 1 to 4 (MLKE) are cytoplasmic. Residues 5–25 (IYLSLSLVLVFACGLLYQLTM) form a helical; Signal-anchor for type II membrane protein membrane-spanning segment. The Lumenal segment spans residues 26-341 (RSQCFFACLP…VSKKPGTGSR (316 aa)). Asn100 carries an N-linked (GlcNAc...) asparagine glycan. Residues 168 to 170 (DTD) carry the DXD motif motif.

The protein belongs to the glycosyltransferase 32 family.

The protein localises to the golgi apparatus membrane. It functions in the pathway protein modification; protein glycosylation. Its function is as follows. Catalyzes the transfer of N-acetylglucosamine (GlcNAc) to core 2 branched O-glycans. Necessary for the synthesis of type III mucin which is specifically produced in the stomach, duodenum, and pancreatic duct. May protect against inflammation-associated gastric adenocarcinoma. The chain is Alpha-1,4-N-acetylglucosaminyltransferase from Mus musculus (Mouse).